We begin with the raw amino-acid sequence, 286 residues long: Pantothenate synthetase (286 aa).

ATP is bound at residue 30–37; sequence MGNLHAGH. The Proton donor role is filled by histidine 37. Glutamine 61 provides a ligand contact to (R)-pantoate. A beta-alanine-binding site is contributed by glutamine 61. 149–152 serves as a coordination point for ATP; it reads GEKD. Glutamine 155 is a (R)-pantoate binding site. ATP is bound by residues valine 178 and 186–189; that span reads MSSR.

This sequence belongs to the pantothenate synthetase family. In terms of assembly, homodimer.

It localises to the cytoplasm. It carries out the reaction (R)-pantoate + beta-alanine + ATP = (R)-pantothenate + AMP + diphosphate + H(+). Its pathway is cofactor biosynthesis; (R)-pantothenate biosynthesis; (R)-pantothenate from (R)-pantoate and beta-alanine: step 1/1. Catalyzes the condensation of pantoate with beta-alanine in an ATP-dependent reaction via a pantoyl-adenylate intermediate. The sequence is that of Pantothenate synthetase from Thioalkalivibrio sulfidiphilus (strain HL-EbGR7).